The sequence spans 432 residues: Adenylosuccinate synthetase (432 aa).

Residues 13-19 (GDEGKGK) and 41-43 (GHT) contribute to the GTP site. Asp-14 serves as the catalytic Proton acceptor. Residues Asp-14 and Gly-41 each contribute to the Mg(2+) site. IMP contacts are provided by residues 14–17 (DEGK), 39–42 (NAGH), Thr-130, Arg-144, Gln-225, Thr-240, and Arg-304. Catalysis depends on His-42, which acts as the Proton donor. 300-306 (AVTGRPR) is a binding site for substrate. GTP is bound by residues Arg-306, 332–334 (KLD), and 415–417 (STG).

It belongs to the adenylosuccinate synthetase family. Homodimer. Mg(2+) serves as cofactor.

It is found in the cytoplasm. The enzyme catalyses IMP + L-aspartate + GTP = N(6)-(1,2-dicarboxyethyl)-AMP + GDP + phosphate + 2 H(+). It functions in the pathway purine metabolism; AMP biosynthesis via de novo pathway; AMP from IMP: step 1/2. Functionally, plays an important role in the de novo pathway of purine nucleotide biosynthesis. Catalyzes the first committed step in the biosynthesis of AMP from IMP. The protein is Adenylosuccinate synthetase of Histophilus somni (strain 129Pt) (Haemophilus somnus).